Consider the following 30-residue polypeptide: Dermaseptin-3.4TR (30 aa).

As to expression, expressed by the skin glands.

It localises to the secreted. In terms of biological role, has antimicrobial activity. The polypeptide is Dermaseptin-3.4TR (Phyllomedusa trinitatis (Trinidad leaf frog)).